The primary structure comprises 179 residues: Large ribosomal subunit protein uL5 (179 aa).

This sequence belongs to the universal ribosomal protein uL5 family. In terms of assembly, part of the 50S ribosomal subunit; part of the 5S rRNA/L5/L18/L25 subcomplex. Contacts the 5S rRNA and the P site tRNA. Forms a bridge to the 30S subunit in the 70S ribosome.

This is one of the proteins that bind and probably mediate the attachment of the 5S RNA into the large ribosomal subunit, where it forms part of the central protuberance. In the 70S ribosome it contacts protein S13 of the 30S subunit (bridge B1b), connecting the 2 subunits; this bridge is implicated in subunit movement. Contacts the P site tRNA; the 5S rRNA and some of its associated proteins might help stabilize positioning of ribosome-bound tRNAs. In Janthinobacterium sp. (strain Marseille) (Minibacterium massiliensis), this protein is Large ribosomal subunit protein uL5.